A 209-amino-acid chain; its full sequence is Uracil phosphoribosyltransferase (209 aa).

5-phospho-alpha-D-ribose 1-diphosphate contacts are provided by residues arginine 79, arginine 104, and 131–139 (DPMLATGGS). Uracil-binding positions include isoleucine 194 and 199-201 (GDA). Aspartate 200 provides a ligand contact to 5-phospho-alpha-D-ribose 1-diphosphate.

The protein belongs to the UPRTase family. Requires Mg(2+) as cofactor.

It carries out the reaction UMP + diphosphate = 5-phospho-alpha-D-ribose 1-diphosphate + uracil. It functions in the pathway pyrimidine metabolism; UMP biosynthesis via salvage pathway; UMP from uracil: step 1/1. Allosterically activated by GTP. Its function is as follows. Catalyzes the conversion of uracil and 5-phospho-alpha-D-ribose 1-diphosphate (PRPP) to UMP and diphosphate. In Streptococcus pneumoniae serotype 4 (strain ATCC BAA-334 / TIGR4), this protein is Uracil phosphoribosyltransferase.